The chain runs to 916 residues: Isoleucine--tRNA ligase (916 aa).

The short motif at 57-67 (PYANGNLHMGH) is the 'HIGH' region element. Glu-554 contributes to the L-isoleucyl-5'-AMP binding site. The short motif at 595–599 (KMSKS) is the 'KMSKS' region element. Lys-598 contributes to the ATP binding site. Zn(2+)-binding residues include Cys-885, Cys-888, Cys-905, and Cys-908.

This sequence belongs to the class-I aminoacyl-tRNA synthetase family. IleS type 1 subfamily. As to quaternary structure, monomer. Zn(2+) serves as cofactor.

Its subcellular location is the cytoplasm. It catalyses the reaction tRNA(Ile) + L-isoleucine + ATP = L-isoleucyl-tRNA(Ile) + AMP + diphosphate. Functionally, catalyzes the attachment of isoleucine to tRNA(Ile). As IleRS can inadvertently accommodate and process structurally similar amino acids such as valine, to avoid such errors it has two additional distinct tRNA(Ile)-dependent editing activities. One activity is designated as 'pretransfer' editing and involves the hydrolysis of activated Val-AMP. The other activity is designated 'posttransfer' editing and involves deacylation of mischarged Val-tRNA(Ile). The protein is Isoleucine--tRNA ligase of Staphylococcus haemolyticus (strain JCSC1435).